The following is a 114-amino-acid chain: As-peptide 126 (114 aa).

Residues 1-22 (MSRALICSLALLAMLVISGTYA) form the signal peptide. 9 repeat units span residues 22-29 (ASPAANAE), 30-37 (ALAAANAE), 38-45 (ASAAANAE), 46-53 (PLAAANAE), 54-61 (PLAAANAE), 62-69 (PLAAANAD), 70-77 (PIAAANAE), 78-85 (PSAAANAE), and 86-93 (PLAAANAE). Positions 22–93 (ASPAANAEAL…AEPLAAANAE (72 aa)) are 9 X 8 AA approximate tandem repeats of [AP]-[ILS]-[AP]-A-A-N-A-[DE]. The propeptide occupies 23–104 (SPAANAEALA…SAGPSPLAAA (82 aa)). The span at 82–96 (ANAEPLAAANAEPSA) shows a compositional bias: low complexity. The interval 82 to 114 (ANAEPLAAANAEPSAGPSPLAAAQDPPVVKMKG) is disordered. Position 105 is a pyrrolidone carboxylic acid (Q105). Position 113 is a lysine amide (K113).

As to expression, expressed by the venom gland.

The protein resides in the secreted. In Anoplius samariensis (Solitary wasp), this protein is As-peptide 126.